The chain runs to 557 residues: CTP synthase (557 aa).

Residues 1 to 270 are amidoligase domain; that stretch reads MTKYVFVTGG…DAIICEELKL (270 aa). S13 contributes to the CTP binding site. S13 provides a ligand contact to UTP. ATP contacts are provided by residues 14 to 19 and D71; that span reads SLGKGI. Residues D71 and E144 each contribute to the Mg(2+) site. CTP contacts are provided by residues 151 to 153, 191 to 196, and K227; these read DIE and KTKPTQ. UTP-binding positions include 191-196 and K227; that span reads KTKPTQ. The 253-residue stretch at 295–547 folds into the Glutamine amidotransferase type-1 domain; it reads TIGMVGKYVD…VEAALAHQQS (253 aa). L-glutamine is bound at residue G356. C383 acts as the Nucleophile; for glutamine hydrolysis in catalysis. Residues 384 to 387, E407, and R473 contribute to the L-glutamine site; that span reads LGMQ. Catalysis depends on residues H520 and E522.

The protein belongs to the CTP synthase family. In terms of assembly, homotetramer.

It catalyses the reaction UTP + L-glutamine + ATP + H2O = CTP + L-glutamate + ADP + phosphate + 2 H(+). The catalysed reaction is L-glutamine + H2O = L-glutamate + NH4(+). The enzyme catalyses UTP + NH4(+) + ATP = CTP + ADP + phosphate + 2 H(+). It functions in the pathway pyrimidine metabolism; CTP biosynthesis via de novo pathway; CTP from UDP: step 2/2. Its activity is regulated as follows. Allosterically activated by GTP, when glutamine is the substrate; GTP has no effect on the reaction when ammonia is the substrate. The allosteric effector GTP functions by stabilizing the protein conformation that binds the tetrahedral intermediate(s) formed during glutamine hydrolysis. Inhibited by the product CTP, via allosteric rather than competitive inhibition. Functionally, catalyzes the ATP-dependent amination of UTP to CTP with either L-glutamine or ammonia as the source of nitrogen. Regulates intracellular CTP levels through interactions with the four ribonucleotide triphosphates. This chain is CTP synthase, found in Paraburkholderia xenovorans (strain LB400).